A 313-amino-acid polypeptide reads, in one-letter code: 4-hydroxy-3-methylbut-2-enyl diphosphate reductase (313 aa).

Residue Cys-12 coordinates [4Fe-4S] cluster. The (2E)-4-hydroxy-3-methylbut-2-enyl diphosphate site is built by His-41 and His-74. 2 residues coordinate dimethylallyl diphosphate: His-41 and His-74. Positions 41 and 74 each coordinate isopentenyl diphosphate. Cys-96 contacts [4Fe-4S] cluster. His-124 contacts (2E)-4-hydroxy-3-methylbut-2-enyl diphosphate. Position 124 (His-124) interacts with dimethylallyl diphosphate. Position 124 (His-124) interacts with isopentenyl diphosphate. Glu-126 functions as the Proton donor in the catalytic mechanism. Thr-167 contributes to the (2E)-4-hydroxy-3-methylbut-2-enyl diphosphate binding site. Residue Cys-197 participates in [4Fe-4S] cluster binding. The (2E)-4-hydroxy-3-methylbut-2-enyl diphosphate site is built by Ser-225, Ser-226, Asn-227, and Ser-269. Residues Ser-225, Ser-226, Asn-227, and Ser-269 each coordinate dimethylallyl diphosphate. Isopentenyl diphosphate-binding residues include Ser-225, Ser-226, Asn-227, and Ser-269.

It belongs to the IspH family. Homodimer. The cofactor is [4Fe-4S] cluster.

The catalysed reaction is isopentenyl diphosphate + 2 oxidized [2Fe-2S]-[ferredoxin] + H2O = (2E)-4-hydroxy-3-methylbut-2-enyl diphosphate + 2 reduced [2Fe-2S]-[ferredoxin] + 2 H(+). The enzyme catalyses dimethylallyl diphosphate + 2 oxidized [2Fe-2S]-[ferredoxin] + H2O = (2E)-4-hydroxy-3-methylbut-2-enyl diphosphate + 2 reduced [2Fe-2S]-[ferredoxin] + 2 H(+). It participates in isoprenoid biosynthesis; dimethylallyl diphosphate biosynthesis; dimethylallyl diphosphate from (2E)-4-hydroxy-3-methylbutenyl diphosphate: step 1/1. It functions in the pathway isoprenoid biosynthesis; isopentenyl diphosphate biosynthesis via DXP pathway; isopentenyl diphosphate from 1-deoxy-D-xylulose 5-phosphate: step 6/6. Functionally, catalyzes the conversion of 1-hydroxy-2-methyl-2-(E)-butenyl 4-diphosphate (HMBPP) into a mixture of isopentenyl diphosphate (IPP) and dimethylallyl diphosphate (DMAPP). Acts in the terminal step of the DOXP/MEP pathway for isoprenoid precursor biosynthesis. The chain is 4-hydroxy-3-methylbut-2-enyl diphosphate reductase from Buchnera aphidicola subsp. Schizaphis graminum (strain Sg).